A 269-amino-acid polypeptide reads, in one-letter code: uncharacterized protein (269 aa).

Over residues 181–191 the composition is skewed to basic and acidic residues; that stretch reads QKKELSPHEIA. Residues 181–203 form a disordered region; the sequence is QKKELSPHEIAESPSSHSTSPMG. The segment covering 193-202 has biased composition (polar residues); the sequence is SPSSHSTSPM. Serine 200 carries the post-translational modification Phosphoserine.

This is an uncharacterized protein from Schizosaccharomyces pombe (strain 972 / ATCC 24843) (Fission yeast).